A 337-amino-acid polypeptide reads, in one-letter code: F420-dependent glucose-6-phosphate dehydrogenase (337 aa).

Asp-40 contacts coenzyme F420-(gamma-Glu)n. His-41 acts as the Proton donor in catalysis. Residues Thr-77 and 108–109 (TG) each bind coenzyme F420-(gamma-Glu)n. Glu-110 acts as the Proton acceptor in catalysis. Residues Asn-113, 178 to 179 (GG), and 181 to 182 (VV) each bind coenzyme F420-(gamma-Glu)n. Positions 196, 199, 260, and 284 each coordinate substrate.

This sequence belongs to the F420-dependent glucose-6-phosphate dehydrogenase family. In terms of assembly, homodimer.

The catalysed reaction is oxidized coenzyme F420-(gamma-L-Glu)(n) + D-glucose 6-phosphate + H(+) = 6-phospho-D-glucono-1,5-lactone + reduced coenzyme F420-(gamma-L-Glu)(n). Its function is as follows. Catalyzes the coenzyme F420-dependent oxidation of glucose 6-phosphate (G6P) to 6-phosphogluconolactone. The chain is F420-dependent glucose-6-phosphate dehydrogenase from Rhodococcus hoagii (strain 103S) (Rhodococcus equi).